The sequence spans 697 residues: tRNA 5-methylaminomethyl-2-thiouridine biosynthesis bifunctional protein MnmC (697 aa).

Residues Met1 to His275 are tRNA (mnm(5)s(2)U34)-methyltransferase. The segment at Val280–Leu697 is FAD-dependent cmnm(5)s(2)U34 oxidoreductase.

It in the N-terminal section; belongs to the methyltransferase superfamily. tRNA (mnm(5)s(2)U34)-methyltransferase family. The protein in the C-terminal section; belongs to the DAO family. Requires FAD as cofactor.

Its subcellular location is the cytoplasm. It catalyses the reaction 5-aminomethyl-2-thiouridine(34) in tRNA + S-adenosyl-L-methionine = 5-methylaminomethyl-2-thiouridine(34) in tRNA + S-adenosyl-L-homocysteine + H(+). Its function is as follows. Catalyzes the last two steps in the biosynthesis of 5-methylaminomethyl-2-thiouridine (mnm(5)s(2)U) at the wobble position (U34) in tRNA. Catalyzes the FAD-dependent demodification of cmnm(5)s(2)U34 to nm(5)s(2)U34, followed by the transfer of a methyl group from S-adenosyl-L-methionine to nm(5)s(2)U34, to form mnm(5)s(2)U34. The protein is tRNA 5-methylaminomethyl-2-thiouridine biosynthesis bifunctional protein MnmC of Shewanella sp. (strain ANA-3).